We begin with the raw amino-acid sequence, 49 residues long: Large ribosomal subunit protein bL33 (49 aa).

The tract at residues 18–49 is disordered; that stretch reads ITTKNKRNNPERLELKKYSPRLKRTTLHRETK. The segment covering 25–34 has biased composition (basic and acidic residues); that stretch reads NNPERLELKK.

It belongs to the bacterial ribosomal protein bL33 family.

In Lysinibacillus sphaericus (strain C3-41), this protein is Large ribosomal subunit protein bL33.